A 465-amino-acid polypeptide reads, in one-letter code: ATP synthase subunit beta 2 (465 aa).

An ATP-binding site is contributed by G148–T155.

The protein belongs to the ATPase alpha/beta chains family. As to quaternary structure, F-type ATPases have 2 components, CF(1) - the catalytic core - and CF(0) - the membrane proton channel. CF(1) has five subunits: alpha(3), beta(3), gamma(1), delta(1), epsilon(1). CF(0) has three main subunits: a(1), b(2) and c(9-12). The alpha and beta chains form an alternating ring which encloses part of the gamma chain. CF(1) is attached to CF(0) by a central stalk formed by the gamma and epsilon chains, while a peripheral stalk is formed by the delta and b chains.

It localises to the cell inner membrane. The catalysed reaction is ATP + H2O + 4 H(+)(in) = ADP + phosphate + 5 H(+)(out). Its function is as follows. Produces ATP from ADP in the presence of a proton gradient across the membrane. The catalytic sites are hosted primarily by the beta subunits. In Psychromonas ingrahamii (strain DSM 17664 / CCUG 51855 / 37), this protein is ATP synthase subunit beta 2.